Here is a 231-residue protein sequence, read N- to C-terminus: Thiamine import ATP-binding protein ThiQ (231 aa).

One can recognise an ABC transporter domain in the interval 2–230 (LHLDRLLIRQ…PPPALRAYLG (229 aa)). 32–39 (GPSGGGKS) lines the ATP pocket.

Belongs to the ABC transporter superfamily. Thiamine importer (TC 3.A.1.19.1) family. The complex is composed of two ATP-binding proteins (ThiQ), two transmembrane proteins (ThiP) and a solute-binding protein (ThiB).

The protein resides in the cell inner membrane. It carries out the reaction thiamine(out) + ATP + H2O = thiamine(in) + ADP + phosphate + H(+). In terms of biological role, part of the ABC transporter complex ThiBPQ involved in thiamine import. Responsible for energy coupling to the transport system. The sequence is that of Thiamine import ATP-binding protein ThiQ from Cereibacter sphaeroides (strain ATCC 17023 / DSM 158 / JCM 6121 / CCUG 31486 / LMG 2827 / NBRC 12203 / NCIMB 8253 / ATH 2.4.1.) (Rhodobacter sphaeroides).